A 256-amino-acid polypeptide reads, in one-letter code: MSNDIFPNKFKAALAAKEIQIGCWSALASPISTEVLGLAGFDWLVLDGEHAPNDITTFIPQLMALKGSRSAPVVRVPTNEPVIIKRLLDIGFYNFLIPFVENVEEAVQAVASTRYPPEGIRGVSVSHRANMFGTVPDYFSQSNKNITILVQIESQHGVDNVDAIAATDGVDGIFVGPSDLAAAFGHLGNANHPEVQRAIQHIFERAKAHGKPSGILAPVEADARRYLEWGATFVAVGSDLGVFRSATQKLADSFKK.

Histidine 50 acts as the Proton acceptor in catalysis. Glutamine 151 provides a ligand contact to substrate. Mg(2+) is bound at residue glutamate 153. Substrate contacts are provided by serine 178 and aspartate 179. Aspartate 179 contributes to the Mg(2+) binding site.

This sequence belongs to the HpcH/HpaI aldolase family. KDGluc aldolase subfamily. In terms of assembly, homohexamer; trimer of dimers. Mg(2+) is required as a cofactor.

The enzyme catalyses 5-dehydro-4-deoxy-D-glucarate = 2-hydroxy-3-oxopropanoate + pyruvate. It catalyses the reaction 2-dehydro-3-deoxy-D-glucarate = 2-hydroxy-3-oxopropanoate + pyruvate. It functions in the pathway carbohydrate acid metabolism; galactarate degradation; D-glycerate from galactarate: step 2/3. Functionally, catalyzes the reversible retro-aldol cleavage of both 5-keto-4-deoxy-D-glucarate and 2-keto-3-deoxy-D-glucarate to pyruvate and tartronic semialdehyde. The polypeptide is 5-keto-4-deoxy-D-glucarate aldolase (Enterobacter sp. (strain 638)).